A 480-amino-acid polypeptide reads, in one-letter code: Beta-glucosidase A (480 aa).

The active-site Proton donor is Glu-177. Glu-378 serves as the catalytic Nucleophile.

Belongs to the glycosyl hydrolase 1 family.

The catalysed reaction is Hydrolysis of terminal, non-reducing beta-D-glucosyl residues with release of beta-D-glucose.. The chain is Beta-glucosidase A (bglA) from Enterobacter agglomerans (Erwinia herbicola).